Consider the following 134-residue polypeptide: Snaclec alboaggregin-A subunit alpha' (134 aa).

Positions 1-134 constitute a C-type lectin domain; it reads DFHCLPGWSA…NPFVCKFPPQ (134 aa). 3 disulfides stabilise this stretch: cysteine 4-cysteine 15, cysteine 32-cysteine 129, and cysteine 104-cysteine 121.

Belongs to the snaclec family. As to quaternary structure, heterotetramer of the subunits alpha, alpha', beta and beta'; disulfide-linked. In terms of tissue distribution, expressed by the venom gland.

The protein localises to the secreted. Its function is as follows. Potent platelet activator that aggregates platelets via both GPIbalpha (GP1BA) and GPVI (GP6). Induces a tyrosine phosphorylation profile in platelets that resembles this produced by collagen, involving the time dependent tyrosine phosphorylation of Fc receptor gamma chain (FCGR1A), phospholipase Cgamma2 (PLCG2), and LAT. This Trimeresurus albolabris (White-lipped pit viper) protein is Snaclec alboaggregin-A subunit alpha'.